A 331-amino-acid chain; its full sequence is Ribosomal RNA small subunit methyltransferase C (331 aa).

The protein belongs to the methyltransferase superfamily. RsmC family. Monomer.

It is found in the cytoplasm. The enzyme catalyses guanosine(1207) in 16S rRNA + S-adenosyl-L-methionine = N(2)-methylguanosine(1207) in 16S rRNA + S-adenosyl-L-homocysteine + H(+). Functionally, specifically methylates the guanine in position 1207 of 16S rRNA in the 30S particle. This chain is Ribosomal RNA small subunit methyltransferase C, found in Ectopseudomonas mendocina (strain ymp) (Pseudomonas mendocina).